The primary structure comprises 82 residues: Short neurotoxin OKI-10 (82 aa).

Residues 1 to 20 (KTLLLTLVVVTIVCLDLGYT) form the signal peptide. Intrachain disulfides connect Cys-23/Cys-44, Cys-37/Cys-61, Cys-63/Cys-74, and Cys-75/Cys-80.

It belongs to the three-finger toxin family. Short-chain subfamily. Type I alpha-neurotoxin sub-subfamily. In terms of tissue distribution, expressed by the venom gland.

Its subcellular location is the secreted. In terms of biological role, binds to muscle nicotinic acetylcholine receptor (nAChR) and inhibit acetylcholine from binding to the receptor, thereby impairing neuromuscular transmission. This chain is Short neurotoxin OKI-10, found in Laticauda laticaudata (Blue-ringed sea krait).